The following is a 721-amino-acid chain: Polyribonucleotide nucleotidyltransferase (721 aa).

Mg(2+) contacts are provided by Asp-487 and Asp-493. A KH domain is found at 554 to 613; the sequence is PRIETFKIPTDKIREVIGTGGKVIREIVEKTGAKVNIDDDGTVKVASSDGESIKAAIKWI. Residues 623-691 form the S1 motif domain; it reads NAIYDGTVVK…DRGKTRLSMK (69 aa). Residues 697-721 form a disordered region; that stretch reads TGEDLEAKQKAEAEKAKAEGAPAAE. Residues 701-714 show a composition bias toward basic and acidic residues; sequence LEAKQKAEAEKAKA.

The protein belongs to the polyribonucleotide nucleotidyltransferase family. Mg(2+) serves as cofactor.

It localises to the cytoplasm. It catalyses the reaction RNA(n+1) + phosphate = RNA(n) + a ribonucleoside 5'-diphosphate. Involved in mRNA degradation. Catalyzes the phosphorolysis of single-stranded polyribonucleotides processively in the 3'- to 5'-direction. This Rhodopseudomonas palustris (strain BisA53) protein is Polyribonucleotide nucleotidyltransferase.